The chain runs to 548 residues: Chaperonin GroEL (548 aa).

ATP is bound by residues 30–33 (TLGP), Lys-51, 87–91 (DGTTT), Gly-415, and Asp-495.

Belongs to the chaperonin (HSP60) family. In terms of assembly, forms a cylinder of 14 subunits composed of two heptameric rings stacked back-to-back. Interacts with the co-chaperonin GroES.

Its subcellular location is the cytoplasm. It carries out the reaction ATP + H2O + a folded polypeptide = ADP + phosphate + an unfolded polypeptide.. Its function is as follows. Together with its co-chaperonin GroES, plays an essential role in assisting protein folding. The GroEL-GroES system forms a nano-cage that allows encapsulation of the non-native substrate proteins and provides a physical environment optimized to promote and accelerate protein folding. The protein is Chaperonin GroEL of Pseudoalteromonas atlantica (strain T6c / ATCC BAA-1087).